The following is a 1164-amino-acid chain: DNA-directed RNA polymerase subunit beta' (1164 aa).

Residues cysteine 60, cysteine 62, cysteine 75, and cysteine 78 each contribute to the Zn(2+) site. Residues aspartate 449, aspartate 451, and aspartate 453 each contribute to the Mg(2+) site. Zn(2+)-binding residues include cysteine 776, cysteine 850, cysteine 857, and cysteine 860.

It belongs to the RNA polymerase beta' chain family. The RNAP catalytic core consists of 2 alpha, 1 beta, 1 beta' and 1 omega subunit. When a sigma factor is associated with the core the holoenzyme is formed, which can initiate transcription. Mg(2+) is required as a cofactor. Requires Zn(2+) as cofactor.

It carries out the reaction RNA(n) + a ribonucleoside 5'-triphosphate = RNA(n+1) + diphosphate. DNA-dependent RNA polymerase catalyzes the transcription of DNA into RNA using the four ribonucleoside triphosphates as substrates. The chain is DNA-directed RNA polymerase subunit beta' from Moorella thermoacetica (strain ATCC 39073 / JCM 9320).